A 360-amino-acid chain; its full sequence is Protein Wnt-2 (360 aa).

The first 25 residues, 1–25, serve as a signal peptide directing secretion; that stretch reads MNAPLGGIWLWLPLLLTWLSPEVSS. 11 cysteine pairs are disulfide-bonded: Cys76–Cys87, Cys127–Cys135, Cys137–Cys157, Cys206–Cys220, Cys208–Cys215, Cys278–Cys309, Cys294–Cys304, Cys308–Cys348, Cys324–Cys339, Cys326–Cys336, and Cys331–Cys332. Ser212 is lipidated: O-palmitoleoyl serine; by PORCN. Asn295 is a glycosylation site (N-linked (GlcNAc...) asparagine).

This sequence belongs to the Wnt family. In terms of processing, palmitoleoylation is required for efficient binding to frizzled receptors. Depalmitoleoylation leads to Wnt signaling pathway inhibition.

Its subcellular location is the secreted. It is found in the extracellular space. The protein resides in the extracellular matrix. Ligand for members of the frizzled family of seven transmembrane receptors. Probable developmental protein. May be a signaling molecule which affects the development of discrete regions of tissues. Is likely to signal over only few cell diameters. The protein is Protein Wnt-2 (WNT2) of Carollia perspicillata (Seba's short-tailed bat).